Consider the following 355-residue polypeptide: Methylthioribose-1-phosphate isomerase (355 aa).

Residues 52-54, R95, and Q204 each bind substrate; that span reads RGA. Residue D245 is the Proton donor of the active site. 255-256 contacts substrate; the sequence is NK.

This sequence belongs to the eIF-2B alpha/beta/delta subunits family. MtnA subfamily.

The catalysed reaction is 5-(methylsulfanyl)-alpha-D-ribose 1-phosphate = 5-(methylsulfanyl)-D-ribulose 1-phosphate. It functions in the pathway amino-acid biosynthesis; L-methionine biosynthesis via salvage pathway; L-methionine from S-methyl-5-thio-alpha-D-ribose 1-phosphate: step 1/6. Catalyzes the interconversion of methylthioribose-1-phosphate (MTR-1-P) into methylthioribulose-1-phosphate (MTRu-1-P). This is Methylthioribose-1-phosphate isomerase from Acaryochloris marina (strain MBIC 11017).